A 295-amino-acid polypeptide reads, in one-letter code: Uridine and thymidine phosphorylase (295 aa).

Residues Arg-81 and 125–128 (RLGT) contribute to the phosphate site. Gln-203 and Arg-205 together coordinate substrate.

It belongs to the PNP/UDP phosphorylase family. In terms of tissue distribution, expressed in hypodermis, pharynx, spermatheca and gonad.

The enzyme catalyses uridine + phosphate = alpha-D-ribose 1-phosphate + uracil. It catalyses the reaction thymidine + phosphate = 2-deoxy-alpha-D-ribose 1-phosphate + thymine. The catalysed reaction is 2'-deoxyuridine + phosphate = 2-deoxy-alpha-D-ribose 1-phosphate + uracil. Its pathway is pyrimidine metabolism; UMP biosynthesis via salvage pathway; uracil from uridine (phosphorylase route): step 1/1. The protein operates within pyrimidine metabolism; dTMP biosynthesis via salvage pathway; dTMP from thymine: step 1/2. Catalyzes the reversible phosphorylytic cleavage of uridine and thymidine to uracil and ribose-phosphate or thymine and deoxyribose-1-phosphate. The produced molecules are then utilized as carbon and energy sources or in the rescue of pyrimidine bases for nucleotide synthesis. Required for normal lifespan. The chain is Uridine and thymidine phosphorylase from Caenorhabditis elegans.